Consider the following 461-residue polypeptide: tRNA modification GTPase MnmE (461 aa).

Arg-22, Glu-87, and Arg-126 together coordinate (6S)-5-formyl-5,6,7,8-tetrahydrofolate. Positions 223–382 constitute a TrmE-type G domain; the sequence is GLSTVILGRP…LEEAIAALFF (160 aa). A K(+)-binding site is contributed by Asn-233. GTP-binding positions include 233-238, 252-258, and 277-280; these read NVGKSS, TDIAGTT, and DTAG. Residue Ser-237 participates in Mg(2+) binding. The K(+) site is built by Thr-252, Ile-254, and Thr-257. Residue Thr-258 participates in Mg(2+) binding. Position 461 (Lys-461) interacts with (6S)-5-formyl-5,6,7,8-tetrahydrofolate.

This sequence belongs to the TRAFAC class TrmE-Era-EngA-EngB-Septin-like GTPase superfamily. TrmE GTPase family. Homodimer. Heterotetramer of two MnmE and two MnmG subunits. It depends on K(+) as a cofactor.

The protein localises to the cytoplasm. Its function is as follows. Exhibits a very high intrinsic GTPase hydrolysis rate. Involved in the addition of a carboxymethylaminomethyl (cmnm) group at the wobble position (U34) of certain tRNAs, forming tRNA-cmnm(5)s(2)U34. The chain is tRNA modification GTPase MnmE from Lysinibacillus sphaericus (strain C3-41).